Consider the following 60-residue polypeptide: uncharacterized protein (60 aa).

The protein to E.coli YjeQ and H.influenzae HI_1714.

This is an uncharacterized protein from Azotobacter vinelandii.